We begin with the raw amino-acid sequence, 1262 residues long: Collagen alpha-1(III) chain (1262 aa).

The first 23 residues, 1 to 23 (MMSFVQKVSLFILAVFQPSVILA), serve as a signal peptide directing secretion. Residues 24–150 (QQDALGGCTH…PSISGGSFSP (127 aa)) constitute a propeptide, N-terminal propeptide. The VWFC domain maps to 29 to 88 (GGCTHLGQEYADRDVWKPEPCQICVCDSGSVLCDDIICDDQELDCPNPEIPLGECCPVCP). Disordered regions lie at residues 95–143 (TELP…CPSI) and 160–1000 (GSVG…GGVA). Residues 102-118 (GPKGDPGSPGSPGRTGA) show a composition bias toward low complexity. Residues 119–134 (PGPPGQPGSPGAPGPP) show a composition bias toward pro residues. The tract at residues 145 to 164 (GGSFSPQYDSYDVKAGSVGM) is nonhelical region (N-terminal). The interval 165–994 (GYPPQPISGF…PGPSGPPGPC (830 aa)) is triple-helical region. Residues 167 to 190 (PPQPISGFPGPPGPSGPPGPPGHA) show a composition bias toward pro residues. Low complexity predominate over residues 192-201 (PPGSNGYQGP). A compositionally biased stretch (pro residues) spans 202–216 (PGEPGQPGPSGPPGP). The span at 228 to 240 (KDGEPGRPGRNGD) shows a compositional bias: basic and acidic residues. The span at 253–264 (PGMPGMPGMKGA) shows a compositional bias: low complexity. Residue Lys262 is modified to 5-hydroxylysine. The segment covering 265 to 274 (RGFDGKDGAK) has biased composition (basic and acidic residues). Composition is skewed to low complexity over residues 276-295 (DSGA…NGSP) and 339-376 (TAGF…QGQA). 5-hydroxylysine is present on Lys283. Gly residues predominate over residues 389 to 414 (GSPGGKGEMGPSGIPGGPGPPGGRGL). Composition is skewed to low complexity over residues 534–549 (MRGL…SDGK) and 631–640 (PGPSGSPGLQ). Gly residues predominate over residues 641–650 (GLPGGPGPAG). A compositionally biased stretch (low complexity) spans 672 to 684 (PKGENGIPGERGP). Gly residues predominate over residues 692–701 (GARGGPGPAG). Composition is skewed to low complexity over residues 723–738 (LQGM…SPGP), 781–790 (TGPAGAPGPA), 802–817 (QGLP…PGQN), and 828–838 (PPGLRGEAGPP). A 5-hydroxylysine modification is found at Lys859. Residues 863-872 (GSPGGPGAAG) are compositionally biased toward gly residues. Residues 895–904 (PGVPGPPGHP) are compositionally biased toward pro residues. Positions 927–940 (PQGAIGSPGASGAR) are enriched in low complexity. The segment covering 976-993 (AGPPGQPGLPGPSGPPGP) has biased composition (pro residues). Residues 995–1003 (CGGGVASLG) are nonhelical region (C-terminal). A propeptide spans 1018 to 1262 (DEPKENEINL…GVDVGPVCFL (245 aa)) (C-terminal propeptide). The Fibrillar collagen NC1 domain occupies 1028 to 1262 (GEIMSSMKSI…GVDVGPVCFL (235 aa)). 3 disulfide bridges follow: Cys1058-Cys1090, Cys1098-Cys1260, and Cys1168-Cys1213. Ca(2+) is bound by residues Asp1076, Asn1078, Gln1079, Cys1081, and Asp1084. An N-linked (GlcNAc...) asparagine glycan is attached at Asn1163.

This sequence belongs to the fibrillar collagen family. In terms of assembly, trimers of identical alpha 1(III) chains. The chains are linked to each other by interchain disulfide bonds. Trimers are also cross-linked via hydroxylysines. Prolines at the third position of the tripeptide repeating unit (G-X-Y) are hydroxylated in some or all of the chains.

Its subcellular location is the secreted. It localises to the extracellular space. The protein localises to the extracellular matrix. Collagen type III occurs in most soft connective tissues along with type I collagen. The protein is Collagen alpha-1(III) chain (COL3A1) of Gallus gallus (Chicken).